The chain runs to 339 residues: Phosphate acyltransferase (339 aa).

It belongs to the PlsX family. In terms of assembly, homodimer. Probably interacts with PlsY.

The protein localises to the cytoplasm. It catalyses the reaction a fatty acyl-[ACP] + phosphate = an acyl phosphate + holo-[ACP]. Its pathway is lipid metabolism; phospholipid metabolism. Catalyzes the reversible formation of acyl-phosphate (acyl-PO(4)) from acyl-[acyl-carrier-protein] (acyl-ACP). This enzyme utilizes acyl-ACP as fatty acyl donor, but not acyl-CoA. This chain is Phosphate acyltransferase, found in Vesicomyosocius okutanii subsp. Calyptogena okutanii (strain HA).